The chain runs to 150 residues: Large ribosomal subunit protein uL13 (150 aa).

A disordered region spans residues 130–150 (EHPHSAQNPQVLSITTNELVK). The span at 134-150 (SAQNPQVLSITTNELVK) shows a compositional bias: polar residues.

It belongs to the universal ribosomal protein uL13 family. As to quaternary structure, part of the 50S ribosomal subunit.

In terms of biological role, this protein is one of the early assembly proteins of the 50S ribosomal subunit, although it is not seen to bind rRNA by itself. It is important during the early stages of 50S assembly. The protein is Large ribosomal subunit protein uL13 of Prochlorococcus marinus (strain SARG / CCMP1375 / SS120).